Here is an 82-residue protein sequence, read N- to C-terminus: Penaeidin-3i (82 aa).

Residues 1-19 form the signal peptide; the sequence is MRLVVCLVFLASFALVCQG. Gln20 carries the post-translational modification Pyrrolidone carboxylic acid. 2 cysteine pairs are disulfide-bonded: Cys55/Cys73 and Cys67/Cys74. Residue Ser81 is modified to Serine amide.

The protein belongs to the penaeidin family.

It localises to the cytoplasmic granule. Antibacterial and antifungal activity. Presents chitin-binding activity. In Penaeus vannamei (Whiteleg shrimp), this protein is Penaeidin-3i.